Reading from the N-terminus, the 865-residue chain is AdoMet-dependent rRNA methyltransferase SPB1 (865 aa).

S-adenosyl-L-methionine-binding residues include Gly-56, Trp-58, Asp-76, Asp-92, and Asp-117. The active-site Proton acceptor is Lys-157. Coiled coils occupy residues 358–400 (ESMD…VRMQ) and 462–492 (GETD…RKAA). Disordered regions lie at residues 370-396 (LEKL…QKDI) and 443-676 (VVAS…TKDG). Residues 386–396 (RKENERKQKDI) are compositionally biased toward basic and acidic residues. A compositionally biased stretch (acidic residues) spans 463-483 (ETDDESDEELDRLETELDDMY). Positions 484-497 (DQFRERKAASDAKY) are enriched in basic and acidic residues. The span at 526 to 545 (ISDDSELEEESSGDSDDEDD) shows a compositional bias: acidic residues. Positions 556–566 (LDTTPSDNSGL) are enriched in polar residues. The segment covering 600–609 (GEDEDADMED) has biased composition (acidic residues). Composition is skewed to basic and acidic residues over residues 610–627 (TVSK…ADKK) and 659–676 (KSGK…TKDG). Positions 762-789 (REAKGRKKMKAAQRLEKLKKKSDLLVNE) form a coiled coil.

It belongs to the class I-like SAM-binding methyltransferase superfamily. RNA methyltransferase RlmE family. SPB1 subfamily. In terms of assembly, component of the nucleolar and nucleoplasmic pre-60S ribosomal particle.

The protein localises to the nucleus. Its subcellular location is the nucleolus. It catalyses the reaction a ribonucleotide in rRNA + S-adenosyl-L-methionine = a 2'-O-methylribonucleotide in rRNA + S-adenosyl-L-homocysteine + H(+). Functionally, required for proper assembly of pre-ribosomal particles during the biogenesis of the 60S ribosomal subunit. This is AdoMet-dependent rRNA methyltransferase SPB1 from Pyricularia oryzae (strain 70-15 / ATCC MYA-4617 / FGSC 8958) (Rice blast fungus).